The primary structure comprises 97 residues: RNA-binding protein Hfq (97 aa).

Positions 10–70 (DPFLNALRKE…ISTIVPARSV (61 aa)) constitute a Sm domain.

It belongs to the Hfq family. Homohexamer.

In terms of biological role, RNA chaperone that binds small regulatory RNA (sRNAs) and mRNAs to facilitate mRNA translational regulation in response to envelope stress, environmental stress and changes in metabolite concentrations. Also binds with high specificity to tRNAs. The polypeptide is RNA-binding protein Hfq (Neisseria gonorrhoeae (strain ATCC 700825 / FA 1090)).